The sequence spans 162 residues: Single-stranded DNA-binding protein 1 (162 aa).

The region spanning L5–G110 is the SSB domain. The segment at G110–F162 is disordered. The span at S122–S140 shows a compositional bias: low complexity. The segment covering G141–G151 has biased composition (polar residues).

As to quaternary structure, homotetramer.

The sequence is that of Single-stranded DNA-binding protein 1 (ssb1) from Chlorobaculum tepidum (strain ATCC 49652 / DSM 12025 / NBRC 103806 / TLS) (Chlorobium tepidum).